The following is a 224-amino-acid chain: Urease accessory protein UreF (224 aa).

It belongs to the UreF family. As to quaternary structure, ureD, UreF and UreG form a complex that acts as a GTP-hydrolysis-dependent molecular chaperone, activating the urease apoprotein by helping to assemble the nickel containing metallocenter of UreC. The UreE protein probably delivers the nickel.

It localises to the cytoplasm. Its function is as follows. Required for maturation of urease via the functional incorporation of the urease nickel metallocenter. The protein is Urease accessory protein UreF of Citrobacter koseri (strain ATCC BAA-895 / CDC 4225-83 / SGSC4696).